The following is a 225-amino-acid chain: UPF0758 protein Ssed_0385 (225 aa).

One can recognise an MPN domain in the interval 102–224; the sequence is ILSDPDLTRD…IVSFAERGWI (123 aa). Zn(2+)-binding residues include histidine 173, histidine 175, and aspartate 186. The short motif at 173-186 is the JAMM motif element; that stretch reads HNHPSGVAEPSLAD.

It belongs to the UPF0758 family.

The polypeptide is UPF0758 protein Ssed_0385 (Shewanella sediminis (strain HAW-EB3)).